The sequence spans 735 residues: Probable ATP-dependent RNA helicase DHR2 (735 aa).

A compositionally biased stretch (polar residues) spans 1-13 (MAANSNSRVASNH). Positions 1 to 29 (MAANSNSRVASNHTSKKQKVRRNIHPFTN) are disordered. Residues 14-24 (TSKKQKVRRNI) are compositionally biased toward basic residues. One can recognise a Helicase ATP-binding domain in the interval 91-257 (MSYIESNPVT…FNNAPILFVE (167 aa)). Residue 104-111 (GETGSGKS) coordinates ATP. The DEAH box signature appears at 203–206 (DEAH). One can recognise a Helicase C-terminal domain in the interval 262–456 (DVKQYYLKAP…SPVLMLKRYG (195 aa)).

This sequence belongs to the DEAD box helicase family. DEAH subfamily. Interacts with NOP19. Interacts with UBP10.

It localises to the nucleus. The protein resides in the nucleolus. The catalysed reaction is ATP + H2O = ADP + phosphate + H(+). Probable ATP-binding RNA helicase. Required for 18S rRNA synthesis. This is Probable ATP-dependent RNA helicase DHR2 (DHR2) from Saccharomyces cerevisiae (strain ATCC 204508 / S288c) (Baker's yeast).